The following is a 205-amino-acid chain: Thiamine-phosphate synthase (205 aa).

Residues 37–41 (QVREK) and N69 contribute to the 4-amino-2-methyl-5-(diphosphooxymethyl)pyrimidine site. Mg(2+) contacts are provided by D70 and D89. A 4-amino-2-methyl-5-(diphosphooxymethyl)pyrimidine-binding site is contributed by S108. 134–136 (TGS) provides a ligand contact to 2-[(2R,5Z)-2-carboxy-4-methylthiazol-5(2H)-ylidene]ethyl phosphate. 4-amino-2-methyl-5-(diphosphooxymethyl)pyrimidine is bound at residue K137. Residues G165 and 185–186 (IS) contribute to the 2-[(2R,5Z)-2-carboxy-4-methylthiazol-5(2H)-ylidene]ethyl phosphate site.

It belongs to the thiamine-phosphate synthase family. The cofactor is Mg(2+).

It catalyses the reaction 2-[(2R,5Z)-2-carboxy-4-methylthiazol-5(2H)-ylidene]ethyl phosphate + 4-amino-2-methyl-5-(diphosphooxymethyl)pyrimidine + 2 H(+) = thiamine phosphate + CO2 + diphosphate. The enzyme catalyses 2-(2-carboxy-4-methylthiazol-5-yl)ethyl phosphate + 4-amino-2-methyl-5-(diphosphooxymethyl)pyrimidine + 2 H(+) = thiamine phosphate + CO2 + diphosphate. It carries out the reaction 4-methyl-5-(2-phosphooxyethyl)-thiazole + 4-amino-2-methyl-5-(diphosphooxymethyl)pyrimidine + H(+) = thiamine phosphate + diphosphate. It functions in the pathway cofactor biosynthesis; thiamine diphosphate biosynthesis; thiamine phosphate from 4-amino-2-methyl-5-diphosphomethylpyrimidine and 4-methyl-5-(2-phosphoethyl)-thiazole: step 1/1. Condenses 4-methyl-5-(beta-hydroxyethyl)thiazole monophosphate (THZ-P) and 2-methyl-4-amino-5-hydroxymethyl pyrimidine pyrophosphate (HMP-PP) to form thiamine monophosphate (TMP). The polypeptide is Thiamine-phosphate synthase (Clostridium botulinum (strain Kyoto / Type A2)).